The primary structure comprises 170 residues: Inosine/xanthosine triphosphatase (170 aa).

The protein belongs to the YjjX NTPase family. In terms of assembly, homodimer. Requires Mg(2+) as cofactor. Mn(2+) serves as cofactor.

It catalyses the reaction XTP + H2O = XDP + phosphate + H(+). The enzyme catalyses ITP + H2O = IDP + phosphate + H(+). In terms of biological role, phosphatase that hydrolyzes non-canonical purine nucleotides such as XTP and ITP to their respective diphosphate derivatives. Probably excludes non-canonical purines from DNA/RNA precursor pool, thus preventing their incorporation into DNA/RNA and avoiding chromosomal lesions. The chain is Inosine/xanthosine triphosphatase from Aliivibrio fischeri (strain ATCC 700601 / ES114) (Vibrio fischeri).